The chain runs to 461 residues: 3-isopropylmalate dehydratase large subunit (461 aa).

[4Fe-4S] cluster contacts are provided by Cys338, Cys398, and Cys401.

It belongs to the aconitase/IPM isomerase family. LeuC type 1 subfamily. As to quaternary structure, heterodimer of LeuC and LeuD. Requires [4Fe-4S] cluster as cofactor.

It catalyses the reaction (2R,3S)-3-isopropylmalate = (2S)-2-isopropylmalate. It participates in amino-acid biosynthesis; L-leucine biosynthesis; L-leucine from 3-methyl-2-oxobutanoate: step 2/4. Functionally, catalyzes the isomerization between 2-isopropylmalate and 3-isopropylmalate, via the formation of 2-isopropylmaleate. The polypeptide is 3-isopropylmalate dehydratase large subunit (Streptococcus mutans serotype c (strain ATCC 700610 / UA159)).